A 61-amino-acid chain; its full sequence is MAKKTIRVRQTGSAIRRPKDQRATLVGLGLNKIGRERELEDTPSVRGMIAKVSHMVEIVEE.

The protein belongs to the universal ribosomal protein uL30 family. As to quaternary structure, part of the 50S ribosomal subunit.

In Maricaulis maris (strain MCS10) (Caulobacter maris), this protein is Large ribosomal subunit protein uL30.